A 77-amino-acid chain; its full sequence is uncharacterized protein (77 aa).

Positions 56-77 (SVIPKQQPPSSAAAISESEFED) are disordered. Over residues 65–77 (SSAAAISESEFED) the composition is skewed to low complexity.

This is an uncharacterized protein from Frog virus 3 (isolate Goorha) (FV-3).